The chain runs to 878 residues: MIKAGSEIRESFLRFFEGKGHTRVSSSSLIPKDDPTLLFTNAGMVQFKNAFLGLEDRGYSRAASCQKCVRAGGKHNDLENVGFTARHHTFFEMLGNFSFGDYFKREAIAWAWEYLTEVIQLPKERLWVTVFQDDDEAYRIWLEEMRIPADRIVRLGEKSNFWMMGETGPCGPCSEIIYDQGEGTGCGRPDCHIECGCDRYLEIWNLVFTQFDRDEAGILTPLPKPNIDTGMGLERLAAVAQGVKSNYDTDLFAPLLAAISRTTGKPYGKNEEDDVSLRVIADHARSVAFLIGDGILPSNEGRGYVLRRILRRAARHGKLLGLNQPFLHELTPVVIEAMKETYPDLLDKKSYITKVILNEEQRFMETLDAGLKILQEEVSRLKKAGTTTIPGDVVFRLYDTFGFPTDLTADIVRRDNLTIDEDGFQRAMEVQREKARESWKGSGEEAISALYQKLSTQGISTVFVGHEGVCNAQSQITALLQKEELVDSLAEGEEGELIVAETPFYGEIGGQIGDTGTIEGEDFVFEVLDTRRPLDNLISHVGRVIKGRGRKGDSVNLIVAEDKRRATEANHSATHLLQAAMKTVMGNHIKQSGSLVTAERLRFDFTHFSKIEENELEQIENLANAVIRRNLPVVTRVLPLEEAMKTGATAVFDEKYGEKVRVVRMGDFSMELCGGTHIQRTGDIGFIKIIHESAIAAGVRRIEAVTGREAVNHARRVENELKKAAKLLKVSPFDLGERVEKLIKTQKDQEKEIETLKGRLAAKDSADLLSQAREIRGIRVLTAAVNAPDAKTLRDFGDKLRDRLQSGIILIGSKAEGKAMLLCLVTKDLTDRYSAGSIIREIAPVVGGKGGGRPDMAQAGGPEPENLERALKHLEEMI.

The Zn(2+) site is built by His571, His575, Cys673, and His677.

The protein belongs to the class-II aminoacyl-tRNA synthetase family. Zn(2+) serves as cofactor.

The protein localises to the cytoplasm. The enzyme catalyses tRNA(Ala) + L-alanine + ATP = L-alanyl-tRNA(Ala) + AMP + diphosphate. Functionally, catalyzes the attachment of alanine to tRNA(Ala) in a two-step reaction: alanine is first activated by ATP to form Ala-AMP and then transferred to the acceptor end of tRNA(Ala). Also edits incorrectly charged Ser-tRNA(Ala) and Gly-tRNA(Ala) via its editing domain. This Syntrophus aciditrophicus (strain SB) protein is Alanine--tRNA ligase.